The chain runs to 505 residues: MSEQQQQGAEQALDLNNEMQARREKLAALRKEGIAFPNDFRRDTTSDKLHSLYDGKSKEELEALNVEVSVAGRMMTRRIMGKASFVTLQDMGGRIQLYVARDDLKDDVYSEQFKKWDLGDIIGARGTLFRTQTGELSIHCHSIHLLTKALRPLPDKFHGLSDQETRYRQRYLDLIANESSRETFRTRSKILAAIRNFMVNKGFMEVETPMMQVIPGGASARPFITHHNALDIDMYLRIAPELYLKRLVVGGFERVFEINRNFRNEGVSPRHNPEFTMMELYMAYADYKDLIVLTEELFRTISQDVLGSSVVQYGDQTFDFGKPFIKMSMKEAICHYRPDIASADLDDMDKACKIAESLGIKIEKSWGLGRVQCEIFDETAESQLIQPTFITEYPAEVSPLARRNDDNPFITDRFEFFIGGREIGNGFSELNDAEDQAERFQDQVKAKDAGDDEAMFYDEDYVTALEHGLPPTAGLGVGIDRMMMLFTNSHTIRDVILFPAMRPQK.

Positions 415 and 422 each coordinate Mg(2+).

It belongs to the class-II aminoacyl-tRNA synthetase family. Homodimer. Requires Mg(2+) as cofactor.

Its subcellular location is the cytoplasm. The catalysed reaction is tRNA(Lys) + L-lysine + ATP = L-lysyl-tRNA(Lys) + AMP + diphosphate. The chain is Lysine--tRNA ligase from Edwardsiella ictaluri (strain 93-146).